The primary structure comprises 189 residues: Elongation factor P (189 aa).

The protein belongs to the elongation factor P family.

It is found in the cytoplasm. It functions in the pathway protein biosynthesis; polypeptide chain elongation. In terms of biological role, involved in peptide bond synthesis. Stimulates efficient translation and peptide-bond synthesis on native or reconstituted 70S ribosomes in vitro. Probably functions indirectly by altering the affinity of the ribosome for aminoacyl-tRNA, thus increasing their reactivity as acceptors for peptidyl transferase. The sequence is that of Elongation factor P from Campylobacter lari (strain RM2100 / D67 / ATCC BAA-1060).